Consider the following 759-residue polypeptide: NADP-dependent malic enzyme (759 aa).

The malic enzyme stretch occupies residues 1 to 428 (MDEQLKQSAL…KLTEFVYKTN (428 aa)). Catalysis depends on Tyr39, which acts as the Proton donor. The active-site Proton acceptor is the Lys94. Residues Glu136, Asp137, and Asp162 each coordinate a divalent metal cation. Residues 195–198 (AGAA), Asn288, and Asn320 contribute to the NADP(+) site. The interval 429–759 (LFMKPIFSQA…AVVEAQTTPL (331 aa)) is phosphate acetyltransferase.

This sequence in the N-terminal section; belongs to the malic enzymes family. It in the C-terminal section; belongs to the phosphate acetyltransferase and butyryltransferase family. Mg(2+) is required as a cofactor. Mn(2+) serves as cofactor.

It catalyses the reaction (S)-malate + NADP(+) = pyruvate + CO2 + NADPH. It carries out the reaction oxaloacetate + H(+) = pyruvate + CO2. This Salmonella typhimurium (strain LT2 / SGSC1412 / ATCC 700720) protein is NADP-dependent malic enzyme (maeB).